A 655-amino-acid chain; its full sequence is Protein movement modulator (655 aa).

Topologically, residues 1–54 (MEQPSILVKILHSIPHVNYTFRRVNDTFNPDSDVYLEPTNNKLQCQQKGIELQS) are extracellular. N18 and N25 each carry an N-linked (GlcNAc...) asparagine glycan. A helical transmembrane segment spans residues 55–75 (LVILASIPAGLLIGSLLGLLL). Residues 76 to 95 (YLLTRCCDRRQRKPSAQRCQ) are Cytoplasmic-facing. The chain crosses the membrane as a helical span at residues 96-116 (SCSLVIITLMTCAAIGLGLYG). The Extracellular portion of the chain corresponds to 117 to 231 (NDDFHNGLLQ…GEFYESIRWP (115 aa)). Residues N171, N188, and N211 are each glycosylated (N-linked (GlcNAc...) asparagine). The helical transmembrane segment at 232–252 (ATLAFLTVLLLLCTVLVIGVA) threads the bilayer. Residues 253–258 (RRSRCT) are Cytoplasmic-facing. Residues 259–279 (LIFFSVSGLFCIIICWLLAGV) traverse the membrane as a helical segment. The Extracellular segment spans residues 280-401 (YLASSVAAGD…ALRGLCGGGL (122 aa)). 2 N-linked (GlcNAc...) asparagine glycosylation sites follow: N326 and N372. The chain crosses the membrane as a helical span at residues 402 to 422 (LGLSLMMVAGLLTSFLLTILV). Residues 423–655 (YADSHAWIYL…CKTLESNDFY (233 aa)) lie on the Cytoplasmic side of the membrane. The segment at 446–576 (APLFPASNAP…NNHYNNTQHR (131 aa)) is disordered. The segment covering 450 to 464 (PASNAPSASISPTAP) has biased composition (low complexity). A compositionally biased stretch (polar residues) spans 465 to 480 (LSTGTINRTLLHHQQA). Gly residues predominate over residues 482–509 (SGGGSGTLPGSGGGAGAGGGVGANGHNG). Low complexity-rich tracts occupy residues 526–539 (SPSS…STAT) and 546–576 (SYHN…TQHR). S597 and S599 each carry phosphoserine.

It belongs to the tweety family.

The protein localises to the cell membrane. The enzyme catalyses chloride(in) = chloride(out). Probable large-conductance Ca(2+)-activated chloride channel. Modulator of embryonic movement. This Drosophila melanogaster (Fruit fly) protein is Protein movement modulator.